A 185-amino-acid chain; its full sequence is Probable chorismate pyruvate-lyase (185 aa).

3 residues coordinate substrate: Arg75, Leu113, and Glu170.

The protein belongs to the UbiC family.

The protein resides in the cytoplasm. The enzyme catalyses chorismate = 4-hydroxybenzoate + pyruvate. It functions in the pathway cofactor biosynthesis; ubiquinone biosynthesis. Removes the pyruvyl group from chorismate, with concomitant aromatization of the ring, to provide 4-hydroxybenzoate (4HB) for the ubiquinone pathway. In Coxiella burnetii (strain RSA 493 / Nine Mile phase I), this protein is Probable chorismate pyruvate-lyase.